Here is a 244-residue protein sequence, read N- to C-terminus: Phosphoadenosine 5'-phosphosulfate reductase (244 aa).

C239 serves as the catalytic Nucleophile; cysteine thiosulfonate intermediate.

Belongs to the PAPS reductase family. CysH subfamily.

Its subcellular location is the cytoplasm. It catalyses the reaction [thioredoxin]-disulfide + sulfite + adenosine 3',5'-bisphosphate + 2 H(+) = [thioredoxin]-dithiol + 3'-phosphoadenylyl sulfate. Its pathway is sulfur metabolism; hydrogen sulfide biosynthesis; sulfite from sulfate: step 3/3. Catalyzes the formation of sulfite from phosphoadenosine 5'-phosphosulfate (PAPS) using thioredoxin as an electron donor. The polypeptide is Phosphoadenosine 5'-phosphosulfate reductase (Escherichia coli O81 (strain ED1a)).